The primary structure comprises 122 residues: Sperm-egg fusion protein LLCFC1 (122 aa).

Positions 1 to 28 (MPPLAPQLCRAVFLVPILLLLQVKPLNG) are cleaved as a signal peptide. The interval 27-51 (NGSPGPKDGSQTEKTPSADQNQEQF) is disordered. The span at 38–49 (TEKTPSADQNQE) shows a compositional bias: polar residues.

It is found in the secreted. Functionally, sperm protein required for fusion of sperm with the egg membrane during fertilization. The polypeptide is Sperm-egg fusion protein LLCFC1 (Homo sapiens (Human)).